The primary structure comprises 77 residues: Short neurotoxin OH-32 (77 aa).

Positions methionine 1–threonine 21 are cleaved as a signal peptide. Intrachain disulfides connect cysteine 24-cysteine 40, cysteine 33-cysteine 58, cysteine 62-cysteine 70, and cysteine 71-cysteine 76.

This sequence belongs to the three-finger toxin family. Short-chain subfamily. In terms of tissue distribution, expressed by the venom gland.

It localises to the secreted. Its function is as follows. This three-finger toxin binds and inhibits the nicotinic acetylcholine receptor (nAChR). The protein is Short neurotoxin OH-32 of Ophiophagus hannah (King cobra).